The primary structure comprises 501 residues: Putative zinc metalloprotease TM_0890 (501 aa).

His-17 contacts Zn(2+). Glu-18 is a catalytic residue. His-21 serves as a coordination point for Zn(2+). The next 4 helical transmembrane spans lie at 93 to 115 (FLIT…LPIT), 401 to 420 (VQTG…SAAS), 427 to 449 (VLTV…LPAL), and 474 to 496 (IIHF…LDIG). Positions 96–180 (TLAGPLFSIL…LVIIRNGEKK (85 aa)) constitute a PDZ domain.

The protein belongs to the peptidase M50B family. Zn(2+) serves as cofactor.

It localises to the cell inner membrane. In Thermotoga maritima (strain ATCC 43589 / DSM 3109 / JCM 10099 / NBRC 100826 / MSB8), this protein is Putative zinc metalloprotease TM_0890.